A 653-amino-acid chain; its full sequence is 4-alpha-glucanotransferase (653 aa).

Glutamate 123 acts as the Nucleophile in catalysis. Aspartate 214 acts as the Proton donor in catalysis.

It belongs to the glycosyl hydrolase 57 family.

The catalysed reaction is Transfers a segment of a (1-&gt;4)-alpha-D-glucan to a new position in an acceptor, which may be glucose or a (1-&gt;4)-alpha-D-glucan.. This chain is 4-alpha-glucanotransferase, found in Thermococcus kodakarensis (strain ATCC BAA-918 / JCM 12380 / KOD1) (Pyrococcus kodakaraensis (strain KOD1)).